Here is a 236-residue protein sequence, read N- to C-terminus: RNA-binding protein 24 (236 aa).

Residues 11–88 (TKIFVGGLPY…RKANVNLAYL (78 aa)) form the RRM domain. Positions 175-199 (QYPYAASPAAAGYVTTGGYSYAVQQ) are necessary for interaction with EIF4E.

As to quaternary structure, interacts with EIF4E; this interaction prevents EIF4E from binding to p53/TP53 mRNA and inhibits the assembly of translation initiation complex. In terms of tissue distribution, expressed strongly in heart and skeletal muscles. Weakly expressed in intestine, aorta, liver, lung, kidney, uterus and bladder.

The protein localises to the nucleus. Its subcellular location is the cytoplasm. Functionally, multifunctional RNA-binding protein involved in the regulation of pre-mRNA splicing, mRNA stability and mRNA translation important for cell fate decision and differentiation. Plays a major role in pre-mRNA alternative splicing regulation. Mediates preferentially muscle-specific exon inclusion in numerous mRNAs important for striated cardiac and skeletal muscle cell differentiation. Binds to intronic splicing enhancer (ISE) composed of stretches of GU-rich motifs localized in flanking intron of exon that will be included by alternative splicing. Involved in embryonic stem cell (ESC) transition to cardiac cell differentiation by promoting pre-mRNA alternative splicing events of several pluripotency and/or differentiation genes. Plays a role in the regulation of mRNA stability. Binds to 3'-untranslated region (UTR) AU-rich elements in target transcripts, such as CDKN1A and MYOG, leading to maintain their stabilities. Involved in myogenic differentiation by regulating MYOG levels. Binds to multiple regions in the mRNA 3'-UTR of TP63, hence inducing its destabilization. Also promotes the destabilization of the CHRM2 mRNA via its binding to a region in the coding sequence. Plays a role in the regulation of mRNA translation. Mediates repression of p53/TP53 mRNA translation through its binding to U-rich element in the 3'-UTR, hence preventing EIF4E from binding to p53/TP53 mRNA and translation initiation. Binds to a huge amount of mRNAs. Required for embryonic heart development, sarcomer and M-band formation in striated muscles. Together with RBM20, promotes the expression of short isoforms of PDLIM5/ENH in cardiomyocytes. This is RNA-binding protein 24 from Mus musculus (Mouse).